A 332-amino-acid polypeptide reads, in one-letter code: Cell division protein ZipA (332 aa).

The Periplasmic portion of the chain corresponds to 1 to 6; it reads MMQDLR. The chain crosses the membrane as a helical span at residues 7-27; that stretch reads LILIVVGAIAIIALLLHGLWT. The Cytoplasmic portion of the chain corresponds to 28 to 332; it reads SRKERSSLFR…RLREVLENNA (305 aa). Composition is skewed to basic and acidic residues over residues 34 to 51 and 61 to 72; these read SLFRDRPAKRSKKEREQS and GEVRVRSAHPED. A disordered region spans residues 34–184; it reads SLFRDRPAKR…PAVAHEPQPA (151 aa). The segment covering 98–107 has biased composition (low complexity); sequence PAPRAVQPAA. The segment covering 121 to 136 has biased composition (acidic residues); sequence DDILLDNYAQEEDDEP. Positions 155–171 are enriched in low complexity; the sequence is PAAEPAFHAEPAHQPQP.

The protein belongs to the ZipA family. In terms of assembly, interacts with FtsZ via their C-terminal domains.

It localises to the cell inner membrane. Essential cell division protein that stabilizes the FtsZ protofilaments by cross-linking them and that serves as a cytoplasmic membrane anchor for the Z ring. Also required for the recruitment to the septal ring of downstream cell division proteins. The sequence is that of Cell division protein ZipA from Serratia proteamaculans (strain 568).